Consider the following 493-residue polypeptide: MAKELKELTPRSESYSQWYQDLVIKADLAENSAVRGCMVIKPYGYAIWEKMQRQLDDMFKETGHVNAYFPLFIPKSFLSREAEHVEGFAKECAVVTHYRLKANPDGDGVVVDPQAKLEEELIVRPTSETIIWNTYKNWIQSHRDLPILCNQWANVVRWEMRTRLFLRTAEFLWQEGHTAHATKEEAEEEARRMLEVYATFAEEYMAMPVVKGVKSANERFAGAVDTYTIEALMQDGKALQSGTSHFLGQNFAKAFNVTFADKDGNRDFVWATSWGVSTRLMGALIMSHSDDNGLVLPPKLAPYQVVIIPIYRNEEQLAQIDEKATQITQALRAKGISVKYDNSDNKKPGWKFAEYELKGIPVRLAMGARDLENNTIEIARRDTLTKETVGLDGIEETVATLLDDIQKNIFQKALNYRKEHTITVDSYEEFKEKIEDGGFILAHWDGTSETEERIKAETKATIRCIPLNGDMTPGKCMVTGKPSPQRVLFARAY.

It belongs to the class-II aminoacyl-tRNA synthetase family. ProS type 3 subfamily. Homodimer.

It is found in the cytoplasm. It carries out the reaction tRNA(Pro) + L-proline + ATP = L-prolyl-tRNA(Pro) + AMP + diphosphate. In terms of biological role, catalyzes the attachment of proline to tRNA(Pro) in a two-step reaction: proline is first activated by ATP to form Pro-AMP and then transferred to the acceptor end of tRNA(Pro). The chain is Proline--tRNA ligase from Porphyromonas gingivalis (strain ATCC BAA-308 / W83).